The chain runs to 297 residues: Putative 6-phosphogluconate dehydrogenase YqeC (297 aa).

Residues 7 to 12 and N94 contribute to the NAD(+) site; that span reads GLGKMG. Residues N94 and 120 to 122 contribute to the substrate site; that span reads SGG. The active-site Proton acceptor is the K170. Substrate is bound at residue 173–174; the sequence is HN. Catalysis depends on E177, which acts as the Proton donor. Y178 and R268 together coordinate substrate.

It belongs to the 6-phosphogluconate dehydrogenase family.

May act as NAD-dependent 6-P-gluconate dehydrogenase. In Bacillus subtilis (strain 168), this protein is Putative 6-phosphogluconate dehydrogenase YqeC (yqeC).